The sequence spans 195 residues: Elongation factor Ts (195 aa).

The involved in Mg(2+) ion dislocation from EF-Tu stretch occupies residues 81–84; sequence TDFV.

Belongs to the EF-Ts family.

The protein resides in the cytoplasm. Associates with the EF-Tu.GDP complex and induces the exchange of GDP to GTP. It remains bound to the aminoacyl-tRNA.EF-Tu.GTP complex up to the GTP hydrolysis stage on the ribosome. In Rubrobacter xylanophilus (strain DSM 9941 / JCM 11954 / NBRC 16129 / PRD-1), this protein is Elongation factor Ts.